Reading from the N-terminus, the 353-residue chain is Histidinol-phosphate aminotransferase (353 aa).

Position 211 is an N6-(pyridoxal phosphate)lysine (K211).

It belongs to the class-II pyridoxal-phosphate-dependent aminotransferase family. Histidinol-phosphate aminotransferase subfamily. Homodimer. Pyridoxal 5'-phosphate is required as a cofactor.

The catalysed reaction is L-histidinol phosphate + 2-oxoglutarate = 3-(imidazol-4-yl)-2-oxopropyl phosphate + L-glutamate. The protein operates within amino-acid biosynthesis; L-histidine biosynthesis; L-histidine from 5-phospho-alpha-D-ribose 1-diphosphate: step 7/9. The polypeptide is Histidinol-phosphate aminotransferase (Klebsiella pneumoniae subsp. pneumoniae (strain ATCC 700721 / MGH 78578)).